The sequence spans 148 residues: Ribosome-binding factor A (148 aa).

The disordered stretch occupies residues 120 to 148; that stretch reads AKAREGASYAGDADPYRTAEPDADDAPRA. Basic and acidic residues predominate over residues 133–148; it reads DPYRTAEPDADDAPRA.

It belongs to the RbfA family. As to quaternary structure, monomer. Binds 30S ribosomal subunits, but not 50S ribosomal subunits or 70S ribosomes.

Its subcellular location is the cytoplasm. Functionally, one of several proteins that assist in the late maturation steps of the functional core of the 30S ribosomal subunit. Associates with free 30S ribosomal subunits (but not with 30S subunits that are part of 70S ribosomes or polysomes). Required for efficient processing of 16S rRNA. May interact with the 5'-terminal helix region of 16S rRNA. The chain is Ribosome-binding factor A from Micrococcus luteus (strain ATCC 4698 / DSM 20030 / JCM 1464 / CCM 169 / CCUG 5858 / IAM 1056 / NBRC 3333 / NCIMB 9278 / NCTC 2665 / VKM Ac-2230) (Micrococcus lysodeikticus).